A 105-amino-acid chain; its full sequence is Ig lambda chain C region (105 aa).

Positions 6–100 (PSVILFPPSS…EGHTVEKSLA (95 aa)) constitute an Ig-like domain. An intrachain disulfide couples Cys-27 to Cys-86.

The sequence is that of Ig lambda chain C region from Oryctolagus cuniculus (Rabbit).